A 103-amino-acid chain; its full sequence is Host transcription reprogramming factor 6 (103 aa).

A signal peptide spans 1–19 (MRATTAFQVIAFLAVGAAA). The C2H2-type zinc-finger motif lies at 66–92 (YWCPNQVCAKTFATQEERDHHIANTVH). Residues 82–103 (ERDHHIANTVHPTNSKRDVLLQ) form a disordered region.

It localises to the secreted. The protein resides in the host nucleus. In terms of biological role, probable secreted effector that translocates into the nuclei of host cells to reprogram the expression of targeted genes by binding on effector binding elements in rice. In Pyricularia oryzae (strain 70-15 / ATCC MYA-4617 / FGSC 8958) (Rice blast fungus), this protein is Host transcription reprogramming factor 6.